Here is a 126-residue protein sequence, read N- to C-terminus: 3-aminobutyryl-CoA ammonia lyase (126 aa).

The protein belongs to the KAL family. In terms of assembly, homohexamer.

It catalyses the reaction (3S)-3-aminobutanoyl-CoA = (2E)-butenoyl-CoA + NH4(+). The protein operates within amino-acid degradation; L-lysine degradation via acetate pathway. Involved in the anaerobic fermentation of lysine. Catalyzes the deamination of L-3-aminobutyryl-CoA to produce crotonoyl-CoA. This is 3-aminobutyryl-CoA ammonia lyase from Acetoanaerobium sticklandii (strain ATCC 12662 / DSM 519 / JCM 1433 / CCUG 9281 / NCIMB 10654 / HF) (Clostridium sticklandii).